The primary structure comprises 373 residues: Queuine tRNA-ribosyltransferase (373 aa).

Catalysis depends on D90, which acts as the Proton acceptor. Residues 90–94, D144, Q193, and G220 contribute to the substrate site; that span reads DSGGF. The interval 251–257 is RNA binding; sequence GVGTPED. D270 acts as the Nucleophile in catalysis. An RNA binding; important for wobble base 34 recognition region spans residues 275-279; the sequence is TRNAR. The Zn(2+) site is built by C308, C310, C313, and H339.

The protein belongs to the queuine tRNA-ribosyltransferase family. As to quaternary structure, homodimer. Within each dimer, one monomer is responsible for RNA recognition and catalysis, while the other monomer binds to the replacement base PreQ1. The cofactor is Zn(2+).

The catalysed reaction is 7-aminomethyl-7-carbaguanine + guanosine(34) in tRNA = 7-aminomethyl-7-carbaguanosine(34) in tRNA + guanine. It functions in the pathway tRNA modification; tRNA-queuosine biosynthesis. Functionally, catalyzes the base-exchange of a guanine (G) residue with the queuine precursor 7-aminomethyl-7-deazaguanine (PreQ1) at position 34 (anticodon wobble position) in tRNAs with GU(N) anticodons (tRNA-Asp, -Asn, -His and -Tyr). Catalysis occurs through a double-displacement mechanism. The nucleophile active site attacks the C1' of nucleotide 34 to detach the guanine base from the RNA, forming a covalent enzyme-RNA intermediate. The proton acceptor active site deprotonates the incoming PreQ1, allowing a nucleophilic attack on the C1' of the ribose to form the product. After dissociation, two additional enzymatic reactions on the tRNA convert PreQ1 to queuine (Q), resulting in the hypermodified nucleoside queuosine (7-(((4,5-cis-dihydroxy-2-cyclopenten-1-yl)amino)methyl)-7-deazaguanosine). The sequence is that of Queuine tRNA-ribosyltransferase from Campylobacter lari (strain RM2100 / D67 / ATCC BAA-1060).